The chain runs to 421 residues: 5-methylthioadenosine/S-adenosylhomocysteine deaminase (421 aa).

His-60 and His-62 together coordinate Zn(2+). Residues Glu-89 and His-181 each coordinate substrate. His-208 serves as a coordination point for Zn(2+). Residues Glu-211 and Asp-296 each contribute to the substrate site. Asp-296 provides a ligand contact to Zn(2+).

This sequence belongs to the metallo-dependent hydrolases superfamily. MTA/SAH deaminase family. Zn(2+) is required as a cofactor.

The catalysed reaction is S-adenosyl-L-homocysteine + H2O + H(+) = S-inosyl-L-homocysteine + NH4(+). It carries out the reaction S-methyl-5'-thioadenosine + H2O + H(+) = S-methyl-5'-thioinosine + NH4(+). In terms of biological role, catalyzes the deamination of 5-methylthioadenosine and S-adenosyl-L-homocysteine into 5-methylthioinosine and S-inosyl-L-homocysteine, respectively. Is also able to deaminate adenosine. In Pyrococcus horikoshii (strain ATCC 700860 / DSM 12428 / JCM 9974 / NBRC 100139 / OT-3), this protein is 5-methylthioadenosine/S-adenosylhomocysteine deaminase.